An 862-amino-acid polypeptide reads, in one-letter code: Transcription factor E2F7 (862 aa).

2 consecutive DNA-binding regions follow at residues 140-209 (RKQK…CWHG) and 279-364 (RKDK…KWIG). Disordered regions lie at residues 561–592 (PGSD…DAPL), 617–643 (TPEQ…NVGE), and 788–862 (KADS…SAGN). Residues 564-574 (DSPTLEETTMS) show a composition bias toward polar residues. The span at 575-590 (KQERPTKRQLNDKDDA) shows a compositional bias: basic and acidic residues. Composition is skewed to polar residues over residues 633-643 (EPVTKHSNVGE) and 832-851 (DVSS…SSAQ).

Belongs to the E2F/DP family. As to quaternary structure, homodimer and heterodimer: mainly forms homodimers and, to a lesser extent, heterodimers with e2f8.

Its subcellular location is the nucleus. Functionally, atypical E2F transcription factor that participates in various processes such as angiogenesis and polyploidization of specialized cells. Mainly acts as a transcription repressor that binds DNA independently of DP proteins and specifically recognizes the E2 recognition site 5'-TTTC[CG]CGC-3'. Directly represses transcription of classical E2F transcription factors such as e2f1. Acts as a regulator of S-phase by recognizing and binding the E2-related site 5'-TTCCCGCC-3' and mediating repression of G1/S-regulated genes. Acts as a promoter of sprouting angiogenesis, possibly by acting as a transcription activator. This Xenopus tropicalis (Western clawed frog) protein is Transcription factor E2F7 (e2f7).